Consider the following 108-residue polypeptide: L-rhamnose mutarotase (108 aa).

Tyrosine 18 lines the substrate pocket. Catalysis depends on histidine 22, which acts as the Proton donor. Substrate contacts are provided by residues tyrosine 41 and 76 to 77 (WW).

It belongs to the rhamnose mutarotase family. As to quaternary structure, homodimer.

The protein resides in the cytoplasm. The enzyme catalyses alpha-L-rhamnose = beta-L-rhamnose. It participates in carbohydrate metabolism; L-rhamnose metabolism. Involved in the anomeric conversion of L-rhamnose. This is L-rhamnose mutarotase from Paraburkholderia phymatum (strain DSM 17167 / CIP 108236 / LMG 21445 / STM815) (Burkholderia phymatum).